A 216-amino-acid polypeptide reads, in one-letter code: Molybdenum cofactor guanylyltransferase (216 aa).

Residues 16–18, Lys28, Asn57, Asp73, and Asp108 contribute to the GTP site; that span reads LAG. Residue Asp108 participates in Mg(2+) binding.

The protein belongs to the MobA family. Monomer. Mg(2+) serves as cofactor.

The protein localises to the cytoplasm. It carries out the reaction Mo-molybdopterin + GTP + H(+) = Mo-molybdopterin guanine dinucleotide + diphosphate. Its function is as follows. Transfers a GMP moiety from GTP to Mo-molybdopterin (Mo-MPT) cofactor (Moco or molybdenum cofactor) to form Mo-molybdopterin guanine dinucleotide (Mo-MGD) cofactor. This is Molybdenum cofactor guanylyltransferase from Rhizobium rhizogenes (strain K84 / ATCC BAA-868) (Agrobacterium radiobacter).